Consider the following 24-residue polypeptide: Pandinin-2 (24 aa).

In terms of assembly, homooligomer. In terms of tissue distribution, expressed by the venom gland.

The protein localises to the secreted. It localises to the target cell membrane. In terms of biological role, disrupts cell membranes through formation of pores. Has strong antimicrobial activity against Gram-positive bacteria B.subtilis, S.epidermidis, E.faecalis and S.aureus. Is less active against Gram-negative bacteria P.aeruginosa and E.coli. Also increases efficacy of antibiotics (ampicillin, chloramphenicol, streptomycin, kanamycin, novobiocin) when tested against E.coli, probably by facilitating their incorporation into the bacteria. Possesses antifungal activity against C.albicans and hemolytic activity against human, sheep and pig erythrocytes. The chain is Pandinin-2 from Pandinus imperator (Emperor scorpion).